Reading from the N-terminus, the 69-residue chain is Large ribosomal subunit protein bL31 (69 aa).

Zn(2+) is bound by residues cysteine 16, cysteine 18, cysteine 37, and cysteine 40.

This sequence belongs to the bacterial ribosomal protein bL31 family. Type A subfamily. As to quaternary structure, part of the 50S ribosomal subunit. The cofactor is Zn(2+).

In terms of biological role, binds the 23S rRNA. This chain is Large ribosomal subunit protein bL31, found in Buchnera aphidicola subsp. Cinara cedri (strain Cc).